The chain runs to 358 residues: 3-isopropylmalate dehydrogenase (358 aa).

Gly-77–Glu-90 is a binding site for NAD(+). Arg-98, Arg-108, Arg-137, and Asp-226 together coordinate substrate. Mg(2+)-binding residues include Asp-226, Asp-250, and Asp-254. Gly-284–Asn-296 provides a ligand contact to NAD(+).

This sequence belongs to the isocitrate and isopropylmalate dehydrogenases family. LeuB type 1 subfamily. As to quaternary structure, homodimer. Mg(2+) serves as cofactor. Requires Mn(2+) as cofactor.

Its subcellular location is the cytoplasm. It carries out the reaction (2R,3S)-3-isopropylmalate + NAD(+) = 4-methyl-2-oxopentanoate + CO2 + NADH. It functions in the pathway amino-acid biosynthesis; L-leucine biosynthesis; L-leucine from 3-methyl-2-oxobutanoate: step 3/4. In terms of biological role, catalyzes the oxidation of 3-carboxy-2-hydroxy-4-methylpentanoate (3-isopropylmalate) to 3-carboxy-4-methyl-2-oxopentanoate. The product decarboxylates to 4-methyl-2 oxopentanoate. This Haemophilus influenzae (strain 86-028NP) protein is 3-isopropylmalate dehydrogenase.